The sequence spans 108 residues: Protein YcgL (108 aa).

In terms of domain architecture, YcgL spans 12 to 96 (MFCVIYRSSK…SPEDLLKQHL (85 aa)).

The polypeptide is Protein YcgL (Shigella dysenteriae serotype 1 (strain Sd197)).